The following is a 163-amino-acid chain: Ribosome maturation factor RimP (163 aa).

It belongs to the RimP family.

It is found in the cytoplasm. Functionally, required for maturation of 30S ribosomal subunits. The polypeptide is Ribosome maturation factor RimP (Polynucleobacter necessarius subsp. necessarius (strain STIR1)).